The primary structure comprises 458 residues: MTFRKSFDCYDFYDRAKVGEKCTLDDWDLMRIPMKAMELKQKYGLDFKGEFIPTDKDMMEKLFKAGFEMLLECGIYCTDTHRIVKYTEDEIWDAINNAQKEFVLGTGRDAVNVRKRSVGDKAKPIVQGGPTGSPISEDVFMPVHMSYALEKEVDTIVNGVMTTVRGKAPVPKSPYEVLAAKTETRLIKNACAMAGRPGMGVOGPETSLSAQGNISADCAGGMTCTDSHEVSQLCELKIDLDAISVIAHYNGNSDIIMDEQMPIFGGYAGGIEETTIVNIATHINSLVMSNASWHLDGPVHIRWGSTNTRETLTIAGWACATISEFTDILSGNQYYPCAGPCTEMCLLEASAQSITDTASGREILSGVASAKGVVTDKTTGMEARMMGEVARATAGVEISEVNVILDKLVALYEKNYASAPAGKTFQECYDVKTVTPTEEYMQVYDGARKKLEDLGLVF.

A non-standard amino acid (pyrrolysine) is located at residue Pyl202.

Belongs to the monomethylamine methyltransferase family.

It catalyses the reaction Co(I)-[methylamine-specific corrinoid protein] + methylamine + H(+) = methyl-Co(III)-[methylamine-specific corrinoid protein] + NH4(+). Its pathway is one-carbon metabolism; methanogenesis from methylamine. Functionally, catalyzes the transfer of the methyl group from monomethylamine to the corrinoid cofactor of MtmC. This is Monomethylamine methyltransferase MtmB3 (mtmB3) from Methanosarcina barkeri (strain Fusaro / DSM 804).